Reading from the N-terminus, the 357-residue chain is Histidinol-phosphate aminotransferase (357 aa).

K218 is modified (N6-(pyridoxal phosphate)lysine).

It belongs to the class-II pyridoxal-phosphate-dependent aminotransferase family. Histidinol-phosphate aminotransferase subfamily. As to quaternary structure, homodimer. Pyridoxal 5'-phosphate serves as cofactor.

The catalysed reaction is L-histidinol phosphate + 2-oxoglutarate = 3-(imidazol-4-yl)-2-oxopropyl phosphate + L-glutamate. It participates in amino-acid biosynthesis; L-histidine biosynthesis; L-histidine from 5-phospho-alpha-D-ribose 1-diphosphate: step 7/9. This Chlorobium luteolum (strain DSM 273 / BCRC 81028 / 2530) (Pelodictyon luteolum) protein is Histidinol-phosphate aminotransferase.